A 448-amino-acid chain; its full sequence is Methionine aminopeptidase 2-1 (448 aa).

The segment at 1-83 (MAAQVIPELQ…TQKAQTEPPR (83 aa)) is disordered. The span at 32 to 48 (ENEDGDSEDDNGDDQGA) shows a compositional bias: acidic residues. The segment covering 59-73 (AKKKKKKKPKKKKKD) has biased composition (basic residues). His-198 is a binding site for substrate. Asp-218, Asp-229, and His-298 together coordinate a divalent metal cation. His-306 is a substrate binding site. A divalent metal cation is bound by residues Glu-334 and Glu-429.

This sequence belongs to the peptidase M24A family. Methionine aminopeptidase eukaryotic type 2 subfamily. Co(2+) serves as cofactor. The cofactor is Zn(2+). It depends on Mn(2+) as a cofactor. Requires Fe(2+) as cofactor.

The protein resides in the cytoplasm. It catalyses the reaction Release of N-terminal amino acids, preferentially methionine, from peptides and arylamides.. Its function is as follows. Cotranslationally removes the N-terminal methionine from nascent proteins. The N-terminal methionine is often cleaved when the second residue in the primary sequence is small and uncharged (Met-Ala-, Cys, Gly, Pro, Ser, Thr, or Val). This Ajellomyces capsulatus (strain G186AR / H82 / ATCC MYA-2454 / RMSCC 2432) (Darling's disease fungus) protein is Methionine aminopeptidase 2-1.